Here is a 99-residue protein sequence, read N- to C-terminus: Putative septation protein SpoVG (99 aa).

It belongs to the SpoVG family.

Functionally, could be involved in septation. The polypeptide is Putative septation protein SpoVG (Aster yellows witches'-broom phytoplasma (strain AYWB)).